A 55-amino-acid polypeptide reads, in one-letter code: Large ribosomal subunit protein eL40 (55 aa).

Belongs to the eukaryotic ribosomal protein eL40 family.

The polypeptide is Large ribosomal subunit protein eL40 (Ignicoccus hospitalis (strain KIN4/I / DSM 18386 / JCM 14125)).